Consider the following 184-residue polypeptide: Ribosome maturation factor RimP (184 aa).

It belongs to the RimP family.

Its subcellular location is the cytoplasm. Functionally, required for maturation of 30S ribosomal subunits. In Corynebacterium diphtheriae (strain ATCC 700971 / NCTC 13129 / Biotype gravis), this protein is Ribosome maturation factor RimP.